A 373-amino-acid chain; its full sequence is LIM domain-binding protein 2 (373 aa).

2 disordered regions span residues 244–291 (APPA…ANLS) and 327–373 (QYDA…QASQ). The segment covering 263 to 280 (STSSTSNSSAGNNANSTG) has biased composition (low complexity). Residues 298-337 (DVMVVGEPTLMGGEFGDEDERLITRLENTQYDAANGMDDE) enclose the LIM interaction domain (LID) domain. Positions 341–361 (NNSPALGNNSPWNSKPPATQE) are enriched in polar residues.

This sequence belongs to the LDB family. Interacts with LHX9. Interacts with SLK; leading to negatively regulate SLK kinase activity. Interacts with LMO4. Post-translationally, ubiquitinated by RLIM/RNF12, leading to its degradation by the proteasome.

Its subcellular location is the nucleus. Its function is as follows. Transcription cofactor. Binds to the LIM domain of a wide variety of LIM domain-containing transcription factors. The sequence is that of LIM domain-binding protein 2 (LDB2) from Homo sapiens (Human).